The following is a 90-amino-acid chain: Small ribosomal subunit protein uS19 (90 aa).

It belongs to the universal ribosomal protein uS19 family.

Protein S19 forms a complex with S13 that binds strongly to the 16S ribosomal RNA. In Nitrosococcus oceani (strain ATCC 19707 / BCRC 17464 / JCM 30415 / NCIMB 11848 / C-107), this protein is Small ribosomal subunit protein uS19.